Here is a 117-residue protein sequence, read N- to C-terminus: UPF0122 protein Teth514_1714 (117 aa).

It belongs to the UPF0122 family.

In terms of biological role, might take part in the signal recognition particle (SRP) pathway. This is inferred from the conservation of its genetic proximity to ftsY/ffh. May be a regulatory protein. This is UPF0122 protein Teth514_1714 from Thermoanaerobacter sp. (strain X514).